The chain runs to 112 residues: PNTVIYNCSECHKRFRSKSGFVKHQKTHTGETPFVCFVCEQRFVCHSALIGHQRIHTGEKPFSCTECGKCFSRRSHLNSHHKTHTGEKSFLCFACGKCFASRSHLTAHHRTH.

4 consecutive C2H2-type zinc fingers follow at residues 6–28 (YNCSECHKRFRSKSGFVKHQKTH), 34–56 (FVCFVCEQRFVCHSALIGHQRIH), 62–84 (FSCTECGKCFSRRSHLNSHHKTH), and 90–112 (FLCFACGKCFASRSHLTAHHRTH).

This sequence belongs to the krueppel C2H2-type zinc-finger protein family.

The protein localises to the nucleus. May be involved in transcriptional regulation. This chain is Gastrula zinc finger protein XlCGF16.1, found in Xenopus laevis (African clawed frog).